The sequence spans 661 residues: UvrABC system protein B (661 aa).

Residues 31 to 186 (DNIEGGEKAQ…LLNALVDIQF (156 aa)) enclose the Helicase ATP-binding domain. 44 to 51 (GATGTGKT) serves as a coordination point for ATP. Positions 97-120 (YYDYYQPEAYVPSSDTYIEKDSSV) match the Beta-hairpin motif. The 167-residue stretch at 435–601 (QMDDLLGEIN…TIKKEIRDLI (167 aa)) folds into the Helicase C-terminal domain. A UVR domain is found at 626-661 (KAMIKKLEGQMQEAAEVLDFELAAQIRDMVIELKNM).

Belongs to the UvrB family. As to quaternary structure, forms a heterotetramer with UvrA during the search for lesions. Interacts with UvrC in an incision complex.

Its subcellular location is the cytoplasm. Functionally, the UvrABC repair system catalyzes the recognition and processing of DNA lesions. A damage recognition complex composed of 2 UvrA and 2 UvrB subunits scans DNA for abnormalities. Upon binding of the UvrA(2)B(2) complex to a putative damaged site, the DNA wraps around one UvrB monomer. DNA wrap is dependent on ATP binding by UvrB and probably causes local melting of the DNA helix, facilitating insertion of UvrB beta-hairpin between the DNA strands. Then UvrB probes one DNA strand for the presence of a lesion. If a lesion is found the UvrA subunits dissociate and the UvrB-DNA preincision complex is formed. This complex is subsequently bound by UvrC and the second UvrB is released. If no lesion is found, the DNA wraps around the other UvrB subunit that will check the other stand for damage. The chain is UvrABC system protein B from Streptococcus suis (strain 98HAH33).